Here is a 430-residue protein sequence, read N- to C-terminus: Adenylosuccinate synthetase (430 aa).

Residues 13-19 (GDEGKGK) and 41-43 (GHT) each bind GTP. Catalysis depends on Asp14, which acts as the Proton acceptor. Residues Asp14 and Gly41 each coordinate Mg(2+). IMP-binding positions include 14–17 (DEGK), 39–42 (NAGH), Thr130, Arg144, Gln225, Thr240, and Arg304. The Proton donor role is filled by His42. 300-306 (ASTGRPR) contacts substrate. Residues Arg306, 332 to 334 (KLD), and 414 to 416 (STG) each bind GTP.

Belongs to the adenylosuccinate synthetase family. As to quaternary structure, homodimer. Mg(2+) is required as a cofactor.

The protein resides in the cytoplasm. The enzyme catalyses IMP + L-aspartate + GTP = N(6)-(1,2-dicarboxyethyl)-AMP + GDP + phosphate + 2 H(+). Its pathway is purine metabolism; AMP biosynthesis via de novo pathway; AMP from IMP: step 1/2. Functionally, plays an important role in the de novo pathway of purine nucleotide biosynthesis. Catalyzes the first committed step in the biosynthesis of AMP from IMP. The protein is Adenylosuccinate synthetase of Xanthomonas oryzae pv. oryzae (strain PXO99A).